Reading from the N-terminus, the 1232-residue chain is Anion exchange protein 3 (1232 aa).

The segment covering 1-11 (MANGVIPPPGG) has biased composition (pro residues). 2 disordered regions span residues 1 to 316 (MANG…KLDR) and 429 to 499 (NDDK…DSHR). Topologically, residues 1–708 (MANGVIPPPG…DLRDALHSQC (708 aa)) are cytoplasmic. Positions 58–75 (DPEKPSRSYSERDFEFHR) are enriched in basic and acidic residues. 2 stretches are compositionally biased toward basic residues: residues 76–97 (HTSH…KLRR) and 104–113 (RHTRRKRKKE). Residues 134-152 (VDEEEEEEEEEEGESEAEP) are compositionally biased toward acidic residues. Residues Ser167, Ser170, Ser175, and Ser198 each carry the phosphoserine modification. Residues 267–279 (DDMKSHRLEDNPG) show a composition bias toward basic and acidic residues. Residues 280–289 (VRRHLVKKPS) are compositionally biased toward basic residues. At Arg295 the chain carries Omega-N-methylarginine. Residues 305–316 (LRRKKKKKKLDR) show a composition bias toward basic residues. A compositionally biased stretch (polar residues) spans 440–450 (NPSSSSMNSVL). The segment covering 481–499 (HDPDAKEKPLHMPGGDSHR) has biased composition (basic and acidic residues). A run of 5 helical transmembrane segments spans residues 709-731 (VAAV…GLLG), 737-774 (LMGV…LLVF), 794-816 (VWVG…SFLV), 826-847 (IFAF…YKVF), and 893-910 (ALLS…AFFL). The interval 709-1232 (VAAVLFIYFA…DEYNELHMPV (524 aa)) is membrane (anion exchange). Residues 911–925 (RKFRNSRFLGGKARR) lie on the Cytoplasmic side of the membrane. The next 5 helical transmembrane spans lie at 926–946 (IIGD…DYSI), 980–1002 (PFPP…LIFM), 1028–1049 (LLLI…LTAA), 1083–1128 (VTGV…IQLS), and 1155–1191 (MHLF…TVPL). Residue Cys1165 is the site of S-palmitoyl cysteine attachment.

This sequence belongs to the anion exchanger (TC 2.A.31) family.

The protein localises to the cell membrane. It carries out the reaction hydrogencarbonate(in) + chloride(out) = hydrogencarbonate(out) + chloride(in). In terms of biological role, sodium-independent anion exchanger which mediates the electroneutral exchange of chloride for bicarbonate ions across the cell membrane. May be involved in the regulation of intracellular pH, and the modulation of cardiac action potential. In Plecturocebus moloch (Dusky titi monkey), this protein is Anion exchange protein 3 (SLC4A3).